Here is a 278-residue protein sequence, read N- to C-terminus: Large ribosomal subunit protein uL2 (278 aa).

2 disordered regions span residues 29–57 (PEKS…QGGG) and 224–278 (VAMN…NKKR). Basic residues predominate over residues 258 to 278 (RSPKKASNKYIVRRRKTNKKR).

Belongs to the universal ribosomal protein uL2 family. In terms of assembly, part of the 50S ribosomal subunit. Forms a bridge to the 30S subunit in the 70S ribosome.

Its function is as follows. One of the primary rRNA binding proteins. Required for association of the 30S and 50S subunits to form the 70S ribosome, for tRNA binding and peptide bond formation. It has been suggested to have peptidyltransferase activity; this is somewhat controversial. Makes several contacts with the 16S rRNA in the 70S ribosome. In Streptomyces griseus subsp. griseus (strain JCM 4626 / CBS 651.72 / NBRC 13350 / KCC S-0626 / ISP 5235), this protein is Large ribosomal subunit protein uL2.